The following is a 184-amino-acid chain: Gastrokine-1 (184 aa).

The first 20 residues, Met1 to Ala20, serve as a signal peptide directing secretion. In terms of domain architecture, BRICHOS spans Asn54–Ala148. Cys81 and Cys140 are joined by a disulfide.

This sequence belongs to the gastrokine family. In terms of tissue distribution, expressed in the stomach. Highly expressed specifically in surface cells of the antrum mucosa from where it is secreted.

The protein resides in the secreted. Its subcellular location is the cytoplasmic granule. The protein localises to the golgi apparatus. In terms of biological role, has mitogenic activity and may be involved in maintaining the integrity of the gastric mucosal epithelium. This Mus musculus (Mouse) protein is Gastrokine-1 (Gkn1).